The sequence spans 215 residues: Adenylate kinase (215 aa).

10–15 (GAGKGT) contacts ATP. Residues 30–59 (STGDIFRKNIKEKTELGQKVEGLLAQGKLV) are NMP. AMP is bound by residues threonine 31, arginine 36, 57-59 (KLV), 85-88 (GFPR), and glutamine 92. The LID stretch occupies residues 126-163 (GRRVCPSCGASYHIDNNPTKVDGICDACQTPVIQREDD). Residue arginine 127 participates in ATP binding. The Zn(2+) site is built by cysteine 130 and cysteine 133. Residue 136–137 (SY) participates in ATP binding. Cysteine 150 and cysteine 153 together coordinate Zn(2+). 2 residues coordinate AMP: arginine 160 and arginine 171. Position 199 (leucine 199) interacts with ATP.

It belongs to the adenylate kinase family. As to quaternary structure, monomer.

Its subcellular location is the cytoplasm. The catalysed reaction is AMP + ATP = 2 ADP. It functions in the pathway purine metabolism; AMP biosynthesis via salvage pathway; AMP from ADP: step 1/1. Its function is as follows. Catalyzes the reversible transfer of the terminal phosphate group between ATP and AMP. Plays an important role in cellular energy homeostasis and in adenine nucleotide metabolism. This is Adenylate kinase from Finegoldia magna (strain ATCC 29328 / DSM 20472 / WAL 2508) (Peptostreptococcus magnus).